Here is a 352-residue protein sequence, read N- to C-terminus: DNA polymerase IV (352 aa).

The 181-residue stretch at 6–186 (IIHIDMDAFY…LPLGKIPGVG (181 aa)) folds into the UmuC domain. Mg(2+) is bound by residues Asp-10 and Asp-104. Glu-105 is an active-site residue.

This sequence belongs to the DNA polymerase type-Y family. Monomer. Requires Mg(2+) as cofactor.

The protein localises to the cytoplasm. It carries out the reaction DNA(n) + a 2'-deoxyribonucleoside 5'-triphosphate = DNA(n+1) + diphosphate. Poorly processive, error-prone DNA polymerase involved in untargeted mutagenesis. Copies undamaged DNA at stalled replication forks, which arise in vivo from mismatched or misaligned primer ends. These misaligned primers can be extended by PolIV. Exhibits no 3'-5' exonuclease (proofreading) activity. May be involved in translesional synthesis, in conjunction with the beta clamp from PolIII. This is DNA polymerase IV from Neisseria meningitidis serogroup C / serotype 2a (strain ATCC 700532 / DSM 15464 / FAM18).